The primary structure comprises 142 residues: Transcription antitermination protein NusB (142 aa).

Belongs to the NusB family.

Involved in transcription antitermination. Required for transcription of ribosomal RNA (rRNA) genes. Binds specifically to the boxA antiterminator sequence of the ribosomal RNA (rrn) operons. The sequence is that of Transcription antitermination protein NusB from Streptococcus uberis (strain ATCC BAA-854 / 0140J).